We begin with the raw amino-acid sequence, 1578 residues long: Cilia- and flagella-associated protein 74 (1578 aa).

Over residues 1 to 14 (MEEPTVQFSDEDLV) the composition is skewed to acidic residues. 2 disordered regions span residues 1 to 21 (MEEP…PPMD) and 33 to 67 (EVER…TTKD). The span at 33–65 (EVERPSEGLEDEGSHSSAKKESKGAEKMRKSTT) shows a compositional bias: basic and acidic residues. Coiled-coil stretches lie at residues 103–156 (RQRM…QSKI) and 330–378 (KYLF…RRQH).

It belongs to the CFAP74 family.

It localises to the cytoplasm. The protein localises to the cytoskeleton. The protein resides in the cilium axoneme. Its subcellular location is the flagellum axoneme. Its function is as follows. As part of the central apparatus of the cilium axoneme may play a role in cilium movement. May play an important role in sperm architecture and function. This Mus musculus (Mouse) protein is Cilia- and flagella-associated protein 74.